The primary structure comprises 302 residues: DNA-directed RNA polymerase II subunit rpb3 (302 aa).

This sequence belongs to the archaeal Rpo3/eukaryotic RPB3 RNA polymerase subunit family. In terms of assembly, component of the RNA polymerase II (Pol II) complex consisting of 12 subunits.

The protein localises to the nucleus. In terms of biological role, DNA-dependent RNA polymerase catalyzes the transcription of DNA into RNA using the four ribonucleoside triphosphates as substrates. Component of RNA polymerase II which synthesizes mRNA precursors and many functional non-coding RNAs. Pol II is the central component of the basal RNA polymerase II transcription machinery. It is composed of mobile elements that move relative to each other. Rpb3 is part of the core element with the central large cleft and the clamp element that moves to open and close the cleft. This Dictyostelium discoideum (Social amoeba) protein is DNA-directed RNA polymerase II subunit rpb3 (polr2c).